Reading from the N-terminus, the 264-residue chain is Proteasome assembly chaperone 2 (264 aa).

Residue threonine 137 is modified to Phosphothreonine.

It belongs to the PSMG2 family. Forms a heterodimer with PSMG1. The PSMG1-PSMG2 heterodimer interacts directly with the PSMA5 and PSMA7 proteasome alpha subunits. Post-translationally, degraded by the proteasome upon completion of 20S proteasome maturation.

The protein resides in the nucleus. Functionally, chaperone protein which promotes assembly of the 20S proteasome as part of a heterodimer with PSMG1. The PSMG1-PSMG2 heterodimer binds to the PSMA5 and PSMA7 proteasome subunits, promotes assembly of the proteasome alpha subunits into the heteroheptameric alpha ring and prevents alpha ring dimerization. The polypeptide is Proteasome assembly chaperone 2 (Mus musculus (Mouse)).